A 492-amino-acid polypeptide reads, in one-letter code: Diacylglycerol kinase 7 (492 aa).

The DAGKc domain maps to 90–248; it reads APHAPMVVFI…SWKIVVSMPS (159 aa).

The protein belongs to the eukaryotic diacylglycerol kinase family. In terms of assembly, monomer. In terms of tissue distribution, highly expressed in flowers, and at low levels in roots, stems and leaves.

The catalysed reaction is a 1,2-diacyl-sn-glycerol + ATP = a 1,2-diacyl-sn-glycero-3-phosphate + ADP + H(+). Its function is as follows. Phosphorylates the second messenger diacylglycerol (DAG) to generate phosphatidic acid (PA), another important signaling molecule. PA is required for plant development and responses to abiotic stress and pathogen attack. May be involved in the accumulation of PA during cold stress xhibits high specificity for 1,2-dioleoyl-sn-glycerol (1,2-DOG), 1-palmitoyl, 2-oleoyl-sn-glycerol (1,2 POG), 1-stearoyl, 2-linoleoyl-sn-glycerol (1,2-SLG) and 1-oleoyl, 2-palmitoyl-sn-glycerol (1,2-OPG). This is Diacylglycerol kinase 7 (DGK7) from Arabidopsis thaliana (Mouse-ear cress).